Consider the following 471-residue polypeptide: Ribosomal protein uS12 methylthiotransferase RimO (471 aa).

The MTTase N-terminal domain occupies 2–122 (IKVSLISLGC…VAPIIQEIYA (121 aa)). Residues Cys-11, Cys-47, Cys-84, Cys-166, Cys-170, and Cys-173 each coordinate [4Fe-4S] cluster. Residues 152 to 395 (LTPKHFAYVK…MALQKQIAAD (244 aa)) enclose the Radical SAM core domain. The 61-residue stretch at 398 to 458 (KTYVGRTLRV…DYDLLALPPG (61 aa)) folds into the TRAM domain.

This sequence belongs to the methylthiotransferase family. RimO subfamily. [4Fe-4S] cluster is required as a cofactor.

It localises to the cytoplasm. The enzyme catalyses L-aspartate(89)-[ribosomal protein uS12]-hydrogen + (sulfur carrier)-SH + AH2 + 2 S-adenosyl-L-methionine = 3-methylsulfanyl-L-aspartate(89)-[ribosomal protein uS12]-hydrogen + (sulfur carrier)-H + 5'-deoxyadenosine + L-methionine + A + S-adenosyl-L-homocysteine + 2 H(+). Catalyzes the methylthiolation of an aspartic acid residue of ribosomal protein uS12. In Opitutus terrae (strain DSM 11246 / JCM 15787 / PB90-1), this protein is Ribosomal protein uS12 methylthiotransferase RimO.